The chain runs to 115 residues: Large ribosomal subunit protein uL22 (115 aa).

It belongs to the universal ribosomal protein uL22 family. In terms of assembly, part of the 50S ribosomal subunit.

Functionally, this protein binds specifically to 23S rRNA; its binding is stimulated by other ribosomal proteins, e.g. L4, L17, and L20. It is important during the early stages of 50S assembly. It makes multiple contacts with different domains of the 23S rRNA in the assembled 50S subunit and ribosome. The globular domain of the protein is located near the polypeptide exit tunnel on the outside of the subunit, while an extended beta-hairpin is found that lines the wall of the exit tunnel in the center of the 70S ribosome. The chain is Large ribosomal subunit protein uL22 from Streptomyces griseus subsp. griseus (strain JCM 4626 / CBS 651.72 / NBRC 13350 / KCC S-0626 / ISP 5235).